Reading from the N-terminus, the 84-residue chain is Replication regulatory protein repA2 (84 aa).

Positions M1–G13 are enriched in polar residues. Residues M1–R31 are disordered.

Its function is as follows. This protein is involved in the determination of copy number in gene replication. It binds to the repA promoter thus inhibiting the synthesis of the mRNA for the initiator protein RepA. The protein is Replication regulatory protein repA2 (repA2) of Escherichia coli.